The primary structure comprises 244 residues: 1-(5-phosphoribosyl)-5-[(5-phosphoribosylamino)methylideneamino] imidazole-4-carboxamide isomerase (244 aa).

The Proton acceptor role is filled by Asp-10. The active-site Proton donor is the Asp-132.

It belongs to the HisA/HisF family.

The protein localises to the cytoplasm. It catalyses the reaction 1-(5-phospho-beta-D-ribosyl)-5-[(5-phospho-beta-D-ribosylamino)methylideneamino]imidazole-4-carboxamide = 5-[(5-phospho-1-deoxy-D-ribulos-1-ylimino)methylamino]-1-(5-phospho-beta-D-ribosyl)imidazole-4-carboxamide. It functions in the pathway amino-acid biosynthesis; L-histidine biosynthesis; L-histidine from 5-phospho-alpha-D-ribose 1-diphosphate: step 4/9. This chain is 1-(5-phosphoribosyl)-5-[(5-phosphoribosylamino)methylideneamino] imidazole-4-carboxamide isomerase, found in Xanthomonas axonopodis pv. citri (strain 306).